The primary structure comprises 321 residues: tRNA-dihydrouridine synthase B (321 aa).

FMN is bound by residues 16-18 and glutamine 70; that span reads PMA. Cysteine 100 (proton donor) is an active-site residue. FMN contacts are provided by residues lysine 139, 200–202, and 224–225; these read NGD and GR.

The protein belongs to the Dus family. DusB subfamily. FMN is required as a cofactor.

It catalyses the reaction a 5,6-dihydrouridine in tRNA + NAD(+) = a uridine in tRNA + NADH + H(+). The enzyme catalyses a 5,6-dihydrouridine in tRNA + NADP(+) = a uridine in tRNA + NADPH + H(+). In terms of biological role, catalyzes the synthesis of 5,6-dihydrouridine (D), a modified base found in the D-loop of most tRNAs, via the reduction of the C5-C6 double bond in target uridines. The polypeptide is tRNA-dihydrouridine synthase B (Yersinia pestis).